The following is a 215-amino-acid chain: Sodium channel regulatory subunit beta-2 (215 aa).

Positions 1–29 (MHRDAWLPRPAFSLTGLSLFFSLVPPGRS) are cleaved as a signal peptide. Topologically, residues 30-157 (MEVTVPATLN…MEEPPERDST (128 aa)) are extracellular. Positions 32–154 (VTVPATLNVL…QVLMEEPPER (123 aa)) constitute an Ig-like C2-type domain. N42, N66, and N74 each carry an N-linked (GlcNAc...) asparagine glycan. Cystine bridges form between C50-C127 and C72-C75. A helical membrane pass occupies residues 158–179 (VAVIVGASVGGFLAVVILVLMV). At 180 to 215 (VKCVRRKKEQKLSTDDLKTEEEGKTDGEGNPDDGAK) the chain is on the cytoplasmic side. The tract at residues 187–215 (KEQKLSTDDLKTEEEGKTDGEGNPDDGAK) is disordered. A compositionally biased stretch (basic and acidic residues) spans 189 to 215 (QKLSTDDLKTEEEGKTDGEGNPDDGAK). S192 is subject to Phosphoserine. At T204 the chain carries Phosphothreonine.

The protein belongs to the sodium channel auxiliary subunit SCN2B (TC 8.A.17) family. As to quaternary structure, a voltage-gated sodium (Nav) channel consists of an ion-conducting pore-forming alpha subunit functional on its own that is regulated by one or more beta subunits. The beta subunit SCN2B is disulfide-linked to the pore-forming alpha subunit. Interacts with SCN1A; regulatory subunit of SCN1A/Nav1.1. Interacts with SCN2A; regulatory subunit of SCN2A/Nav1.2. Interacts with SCN3A; regulatory subunit of SCN3A/Nav1.3. Interacts with SCN5A; regulatory subunit of SCN5A/Nav1.5. Interacts with SCN8A; regulatory subunit of SCN8A/Nav1.6. Interacts with SCN9A; regulatory subunit of SCN9A/Nav1.7. Interacts with SCN10A; regulatory subunit of SCN10A/Nav1.8. Interacts with TNR; may play a crucial role in clustering and regulation of activity of SCN2B-containing Nav channels at nodes of Ranvier.

It localises to the cell membrane. It is found in the cell projection. Its subcellular location is the axon. Functionally, regulatory subunit of multiple voltage-gated sodium (Nav) channels directly mediating the depolarization of excitable membranes. Navs, also called VGSCs (voltage-gated sodium channels) or VDSCs (voltage-dependent sodium channels), operate by switching between closed and open conformations depending on the voltage difference across the membrane. In the open conformation they allow Na(+) ions to selectively pass through the pore, along their electrochemical gradient. The influx of Na+ ions provokes membrane depolarization, initiating the propagation of electrical signals throughout cells and tissues. The accessory beta subunits participate in localization and functional modulation of the Nav channels. Modulates the activity of SCN1A/Nav1.1, SCN2A/Nav1.2, SCN2A/Nav1.3, SCN5A/Nav1.5, SCN8A/Nav1.6, SCN9A/Nav1.7 and SCN10A/Nav1.8. This is Sodium channel regulatory subunit beta-2 from Homo sapiens (Human).